The sequence spans 1187 residues: DNA-directed RNA polymerase subunit beta (1187 aa).

Belongs to the RNA polymerase beta chain family. In terms of assembly, the RNAP catalytic core consists of 2 alpha, 1 beta, 1 beta' and 1 omega subunit. When a sigma factor is associated with the core the holoenzyme is formed, which can initiate transcription.

The enzyme catalyses RNA(n) + a ribonucleoside 5'-triphosphate = RNA(n+1) + diphosphate. In terms of biological role, DNA-dependent RNA polymerase catalyzes the transcription of DNA into RNA using the four ribonucleoside triphosphates as substrates. The polypeptide is DNA-directed RNA polymerase subunit beta (Petrotoga mobilis (strain DSM 10674 / SJ95)).